The chain runs to 316 residues: 4-hydroxy-3-methylbut-2-enyl diphosphate reductase (316 aa).

Cys12 provides a ligand contact to [4Fe-4S] cluster. Residues His43 and His81 each contribute to the (2E)-4-hydroxy-3-methylbut-2-enyl diphosphate site. 2 residues coordinate dimethylallyl diphosphate: His43 and His81. Residues His43 and His81 each coordinate isopentenyl diphosphate. Cys103 is a [4Fe-4S] cluster binding site. His131 contacts (2E)-4-hydroxy-3-methylbut-2-enyl diphosphate. Residue His131 participates in dimethylallyl diphosphate binding. His131 lines the isopentenyl diphosphate pocket. The active-site Proton donor is the Glu133. A (2E)-4-hydroxy-3-methylbut-2-enyl diphosphate-binding site is contributed by Thr170. Cys198 lines the [4Fe-4S] cluster pocket. (2E)-4-hydroxy-3-methylbut-2-enyl diphosphate-binding residues include Ser226, Asn228, and Ser271. The dimethylallyl diphosphate site is built by Ser226, Asn228, and Ser271. Residues Ser226, Asn228, and Ser271 each contribute to the isopentenyl diphosphate site.

It belongs to the IspH family. Requires [4Fe-4S] cluster as cofactor.

The enzyme catalyses isopentenyl diphosphate + 2 oxidized [2Fe-2S]-[ferredoxin] + H2O = (2E)-4-hydroxy-3-methylbut-2-enyl diphosphate + 2 reduced [2Fe-2S]-[ferredoxin] + 2 H(+). The catalysed reaction is dimethylallyl diphosphate + 2 oxidized [2Fe-2S]-[ferredoxin] + H2O = (2E)-4-hydroxy-3-methylbut-2-enyl diphosphate + 2 reduced [2Fe-2S]-[ferredoxin] + 2 H(+). It participates in isoprenoid biosynthesis; dimethylallyl diphosphate biosynthesis; dimethylallyl diphosphate from (2E)-4-hydroxy-3-methylbutenyl diphosphate: step 1/1. The protein operates within isoprenoid biosynthesis; isopentenyl diphosphate biosynthesis via DXP pathway; isopentenyl diphosphate from 1-deoxy-D-xylulose 5-phosphate: step 6/6. Functionally, catalyzes the conversion of 1-hydroxy-2-methyl-2-(E)-butenyl 4-diphosphate (HMBPP) into a mixture of isopentenyl diphosphate (IPP) and dimethylallyl diphosphate (DMAPP). Acts in the terminal step of the DOXP/MEP pathway for isoprenoid precursor biosynthesis. This Bacillus cereus (strain B4264) protein is 4-hydroxy-3-methylbut-2-enyl diphosphate reductase.